The primary structure comprises 488 residues: Monothiol glutaredoxin-S17 (488 aa).

The 106-residue stretch at S2–G107 folds into the Thioredoxin domain. 3 Glutaredoxin domains span residues K154–T256, R284–G386, and E391–E488. K408 contacts glutathione. C416 contributes to the [2Fe-2S] cluster binding site. Glutathione is bound by residues R445, F457, and C470 to D471.

It belongs to the glutaredoxin family. CGFS subfamily. As to quaternary structure, [2Fe-2S]-bridged holo-homodimer. Interacts in vitro with SUFE1, BOLA1, BOLA2 and BOLA4. Interacts in vivo only with BOLA2. Interacts with RGLG3 and RGLG4. Post-translationally, ubiquitinated at Lys-154. Polyubiquitinated by RGLG3 and RGLG4. Polyubiquitination of GRXS17 leads to its degradation by the proteasome.

The protein localises to the cytoplasm. Functionally, may only reduce GSH-thiol disulfides, but not protein disulfides. Participates probably to the maturation of iron-sulfur proteins and to the regulation of the redox state of the BOLA proteins. The GRXS17-BOLA2 heterodimer binds a labile, oxygen sensitive iron-sulfur cluster. The chain is Monothiol glutaredoxin-S17 from Arabidopsis thaliana (Mouse-ear cress).